Consider the following 400-residue polypeptide: Elongation factor Tu (400 aa).

The region spanning 10–208 is the tr-type G domain; that stretch reads KPHLNVGTIG…TMDEYFPEPQ (199 aa). Positions 19–26 are G1; it reads GHIDHGKT. A GTP-binding site is contributed by 19–26; it reads GHIDHGKT. Position 26 (T26) interacts with Mg(2+). Residues 60 to 64 form a G2 region; sequence GITIN. The tract at residues 81–84 is G3; the sequence is DCPG. Residues 81–85 and 136–139 contribute to the GTP site; these read DCPGH and NKTD. Positions 136–139 are G4; sequence NKTD. The G5 stretch occupies residues 174–176; it reads SAL.

It belongs to the TRAFAC class translation factor GTPase superfamily. Classic translation factor GTPase family. EF-Tu/EF-1A subfamily. As to quaternary structure, monomer.

It localises to the cytoplasm. It catalyses the reaction GTP + H2O = GDP + phosphate + H(+). In terms of biological role, GTP hydrolase that promotes the GTP-dependent binding of aminoacyl-tRNA to the A-site of ribosomes during protein biosynthesis. The protein is Elongation factor Tu of Thermosipho melanesiensis (strain DSM 12029 / CIP 104789 / BI429).